The sequence spans 265 residues: 3-methyl-2-oxobutanoate hydroxymethyltransferase (265 aa).

Residues Asp-41 and Asp-80 each coordinate Mg(2+). Residues 41-42 (DS), Asp-80, and Lys-109 each bind 3-methyl-2-oxobutanoate. Position 111 (Glu-111) interacts with Mg(2+). Catalysis depends on Glu-178, which acts as the Proton acceptor.

The protein belongs to the PanB family. In terms of assembly, homodecamer; pentamer of dimers. The cofactor is Mg(2+).

It localises to the cytoplasm. The enzyme catalyses 3-methyl-2-oxobutanoate + (6R)-5,10-methylene-5,6,7,8-tetrahydrofolate + H2O = 2-dehydropantoate + (6S)-5,6,7,8-tetrahydrofolate. The protein operates within cofactor biosynthesis; (R)-pantothenate biosynthesis; (R)-pantoate from 3-methyl-2-oxobutanoate: step 1/2. Catalyzes the reversible reaction in which hydroxymethyl group from 5,10-methylenetetrahydrofolate is transferred onto alpha-ketoisovalerate to form ketopantoate. In Thermosipho africanus (strain TCF52B), this protein is 3-methyl-2-oxobutanoate hydroxymethyltransferase.